We begin with the raw amino-acid sequence, 609 residues long: MPTWWGRKSCKNKDDNHRGIISTDRDIKSSAVVVDPPLTPTRGGTPRCSREFAGASSAFSGFDSDSTEKKGHPLPRPLLSPVSIHHQDHVSGSTSGSTSVSSVSSSGSADDQSQLVASRGRGDVKFNVAAAPRSPERVSPKAATITTRPTSPRHQRLSGVVSLESSTGRNDDGRSSSECHPLPRPPTSPTSPSAVHGSRIGGGYETSPSGFSTWKKGKFLGSGTFGQVYLGFNSEKGKMCAIKEVKVISDDQTSKECLKQLNQEINLLNQLCHPNIVQYYGSELSEETLSVYLEYVSGGSIHKLLKDYGSFTEPVIQNYTRQILAGLAYLHGRNTVHRDIKGANILVDPNGEIKLADFGMAKHVTAFSTMLSFKGSPYWMAPEVVMSQNGYTHAVDIWSLGCTILEMATSKPPWSQFEGVAAIFKIGNSKDTPEIPDHLSNDAKNFIRLCLQRNPTVRPTASQLLEHPFLRNTTRVASTSLPKDFPPRSYDGNFSLQPTREPYPGRLSHDNYAKQPLSRTIKSPSRENVRAITSLPVSPCSSPLRQLGPAYKSCFLSPPHPSYAFPGQDSGYNLAEFAASPFRMKKDAMMEPSSFRTQTPNSPLRSRLV.

Residues 1–202 (MPTWWGRKSC…SAVHGSRIGG (202 aa)) form a disordered region. Residues 11-28 (KNKDDNHRGIISTDRDIK) are compositionally biased toward basic and acidic residues. 2 stretches are compositionally biased toward low complexity: residues 40–64 (PTRGGTPRCSREFAGASSAFSGFDS) and 90–108 (VSGSTSGSTSVSSVSSSGS). Positions 214-470 (WKKGKFLGSG…ASQLLEHPFL (257 aa)) constitute a Protein kinase domain. Residues 220–228 (LGSGTFGQV) and Lys243 contribute to the ATP site. Asp339 acts as the Proton acceptor in catalysis. Disordered stretches follow at residues 487–511 (PRSYDGNFSLQPTREPYPGRLSHDN) and 590–609 (MEPSSFRTQTPNSPLRSRLV). Positions 594-609 (SFRTQTPNSPLRSRLV) are enriched in polar residues.

This sequence belongs to the protein kinase superfamily. STE Ser/Thr protein kinase family. MAP kinase kinase kinase subfamily. As to quaternary structure, interacts with PBL27. As to expression, expressed in flower buds, roots, leaves, seedlings, stems and immature siliques. Absent of mature pollen.

The catalysed reaction is L-seryl-[protein] + ATP = O-phospho-L-seryl-[protein] + ADP + H(+). It catalyses the reaction L-threonyl-[protein] + ATP = O-phospho-L-threonyl-[protein] + ADP + H(+). The protein is Mitogen-activated protein kinase kinase kinase 3 of Arabidopsis thaliana (Mouse-ear cress).